We begin with the raw amino-acid sequence, 941 residues long: Translation initiation factor IF-2 (941 aa).

Disordered stretches follow at residues 61 to 204 and 249 to 274; these read IQSN…RREN and QEKDKETKKAKKSNKPKAIPAAKNNK. The segment covering 147-163 has biased composition (basic and acidic residues); that stretch reads EKAKQKLQEIQKSREAL. Low complexity predominate over residues 164 to 179; it reads NKLTQSNTNNANNANS. Residues 180 to 204 are compositionally biased toward basic and acidic residues; sequence AKKEISEVAKQEREQEHLDNKRREN. One can recognise a tr-type G domain in the interval 440 to 609; the sequence is ERPPVVTIMG…LIQADIMELK (170 aa). Positions 449 to 456 are G1; the sequence is GHVDHGKT. 449-456 contributes to the GTP binding site; the sequence is GHVDHGKT. Residues 474 to 478 form a G2 region; that stretch reads GITQH. The interval 495 to 498 is G3; sequence DTPG. GTP-binding positions include 495-499 and 549-552; these read DTPGH and NKMD. The G4 stretch occupies residues 549–552; that stretch reads NKMD. The interval 585-587 is G5; the sequence is SAK.

It belongs to the TRAFAC class translation factor GTPase superfamily. Classic translation factor GTPase family. IF-2 subfamily.

Its subcellular location is the cytoplasm. One of the essential components for the initiation of protein synthesis. Protects formylmethionyl-tRNA from spontaneous hydrolysis and promotes its binding to the 30S ribosomal subunits. Also involved in the hydrolysis of GTP during the formation of the 70S ribosomal complex. This chain is Translation initiation factor IF-2, found in Helicobacter acinonychis (strain Sheeba).